The sequence spans 143 residues: Transthyretin-like protein 33 (143 aa).

The signal sequence occupies residues 1–20 (MSRLACISSLFILCAIGSEA).

Belongs to the nematode transthyretin-like family. Expressed in head cells next to and anterior of the first pharyngeal bulb, the pharynx, and the hypodermis.

The protein resides in the secreted. Protects dopaminergic neurons from degeneration caused by oxidative stress. In Caenorhabditis elegans, this protein is Transthyretin-like protein 33.